Here is a 196-residue protein sequence, read N- to C-terminus: Charged multivesicular body protein 1a (196 aa).

M1 carries the N-acetylmethionine modification. Residues 5–42 (LFQLKFTAKQLEKLAKKAEKDSKAEQAKVKKALQQKNV) adopt a coiled-coil conformation. At S101 the chain carries Phosphoserine. Residues 102–124 (AMDLQKVSAVMDRFEQQVQNLDV) adopt a coiled-coil conformation. At S173 the chain carries Phosphoserine. The MIT-interacting motif motif lies at 185 to 195 (DQLSRRLAALR).

The protein belongs to the SNF7 family. Probable peripherally associated component of the endosomal sorting required for transport complex III (ESCRT-III). ESCRT-III components are thought to multimerize to form a flat lattice on the perimeter membrane of the endosome. Several assembly forms of ESCRT-III may exist that interact and act sequentially. Self-associates. Interacts with CHMP1B. Interacts with VPS4A. Interacts with VPS4B. Interacts with PHF1. Interacts with IST1. Interacts with MITD1. As to expression, highly expressed in adult heart, kidney and liver. Expressed at lower levels in adult colon, spleen, lung, brain, testis and muscle. Also expressed in myoblasts and embryo fibroblasts.

It localises to the cytoplasm. It is found in the endosome membrane. The protein localises to the nucleus matrix. Functionally, probable peripherally associated component of the endosomal sorting required for transport complex III (ESCRT-III) which is involved in multivesicular bodies (MVBs) formation and sorting of endosomal cargo proteins into MVBs. MVBs contain intraluminal vesicles (ILVs) that are generated by invagination and scission from the limiting membrane of the endosome and mostly are delivered to lysosomes enabling degradation of membrane proteins, such as stimulated growth factor receptors, lysosomal enzymes and lipids. The MVB pathway appears to require the sequential function of ESCRT-O, -I,-II and -III complexes. ESCRT-III proteins mostly dissociate from the invaginating membrane before the ILV is released. The ESCRT machinery also functions in topologically equivalent membrane fission events, such as the terminal stages of cytokinesis. ESCRT-III proteins are believed to mediate the necessary vesicle extrusion and/or membrane fission activities, possibly in conjunction with the AAA ATPase VPS4. Involved in cytokinesis. Involved in recruiting VPS4A and/or VPS4B to the midbody of dividing cells. May also be involved in chromosome condensation. Targets the Polycomb group (PcG) protein BMI1/PCGF4 to regions of condensed chromatin. May play a role in stable cell cycle progression and in PcG gene silencing. This chain is Charged multivesicular body protein 1a (Chmp1a), found in Mus musculus (Mouse).